A 111-amino-acid chain; its full sequence is FK506-binding protein 1 (111 aa).

Residues 1–20 (MGVEKTIITQGSGPSPQVGQ) are disordered. The span at 7–20 (IITQGSGPSPQVGQ) shows a compositional bias: polar residues. Residues 19 to 111 (GQKVTMEYTG…IFDVELKKIG (93 aa)) enclose the PPIase FKBP-type domain.

It belongs to the FKBP-type PPIase family. FKBP1 subfamily.

Its subcellular location is the cytoplasm. The enzyme catalyses [protein]-peptidylproline (omega=180) = [protein]-peptidylproline (omega=0). Inhibited by both FK506 and rapamycin. In terms of biological role, PPIases accelerate the folding of proteins. It catalyzes the cis-trans isomerization of proline imidic peptide bonds in oligopeptides. In Gibberella zeae (strain ATCC MYA-4620 / CBS 123657 / FGSC 9075 / NRRL 31084 / PH-1) (Wheat head blight fungus), this protein is FK506-binding protein 1 (FPR1).